A 110-amino-acid polypeptide reads, in one-letter code: Movement protein TGB2 (110 aa).

Over methionine 1–proline 10 the chain is Cytoplasmic. The helical transmembrane segment at threonine 11–threonine 34 threads the bilayer. At arginine 35–proline 76 the chain is on the lumenal side. Residues phenylalanine 77–leucine 92 traverse the membrane as a helical segment. The Cytoplasmic portion of the chain corresponds to serine 93 to alanine 110.

Belongs to the Tymovirales TGBp2 protein family.

It is found in the host endoplasmic reticulum membrane. Functionally, plays a role in viral cell-to-cell propagation, by facilitating genome transport to neighboring plant cells through plasmosdesmata,. The protein is Movement protein TGB2 of Plantago asiatica (P1AMV).